The primary structure comprises 514 residues: Probable transposase for insertion sequence element IS1353 (514 aa).

Positions 172–216 (KGDTSLEQRHEALLRELAELESQNQRLRMENAILEKASELIKKDM) form a coiled coil. The Integrase catalytic domain occupies 346 to 510 (HASAPNTKWL…SPIEYRHAVG (165 aa)). Asp-357 and Asp-417 together coordinate Mg(2+).

The protein belongs to the transposase 8 family.

Functionally, probably involved in the transposition of insertion sequence IS1353. The polypeptide is Probable transposase for insertion sequence element IS1353 (Shigella flexneri).